Reading from the N-terminus, the 859-residue chain is Protein argonaute-2 (859 aa).

Residues 1 to 27 (MYSGAGPALAPPAPPPPIQGYAFKPPP) are disordered. At Tyr-2 the chain carries 3'-nitrotyrosine. Over residues 9–27 (LAPPAPPPPIQGYAFKPPP) the composition is skewed to pro residues. One can recognise a PAZ domain in the interval 229–348 (PVIEFVCEVL…LPLEVCNIVA (120 aa)). Residues 311–316 (YFKDRH) form an interaction with guide RNA region. Ser-387 bears the Phosphoserine mark. In terms of domain architecture, Piwi spans 517-818 (LVVVILPGKT…VAFRARYHLV (302 aa)). The interaction with guide RNA stretch occupies residues 524–566 (GKTPVYAEVKRVGDTVLGMATQCVQMKNVQRTTPQTLSNLCLK). Residues 587-590 (FQQP) form an interaction with GW182 family members region. Position 597 (Asp-597) interacts with a divalent metal cation. The interaction with GW182 family members stretch occupies residues 650–660 (LIQFYKSTRFK). Asp-669 is an a divalent metal cation binding site. Residue Pro-700 is modified to 4-hydroxyproline. Interaction with guide RNA regions lie at residues 709–710 (KR), 753–761 (HAGIQGTSR), and 790–812 (YVRCTRSVSIPAPAYYAHLVAFR). His-807 is a binding site for a divalent metal cation. Phosphoserine occurs at positions 824, 828, 831, and 834.

This sequence belongs to the argonaute family. Ago subfamily. Interacts with DICER1 through its Piwi domain and with TARBP2 during assembly of the RNA-induced silencing complex (RISC). Together, DICER1, AGO2 and TARBP2 constitute the trimeric RISC loading complex (RLC), or micro-RNA (miRNA) loading complex (miRLC). Within the RLC/miRLC, DICER1 and TARBP2 are required to process precursor miRNAs (pre-miRNAs) to mature miRNAs and then load them onto AGO2. AGO2 bound to the mature miRNA constitutes the minimal RISC and may subsequently dissociate from DICER1 and TARBP2. Note however that the term RISC has also been used to describe the trimeric RLC/miRLC. The formation of RISC complexes containing siRNAs rather than miRNAs appears to occur independently of DICER1. Interacts with AGO1. Also interacts with DDB1, DDX5, DDX6, DDX20, DHX30, DHX36, DDX47, DHX9, ELAVL, FXR1, GEMIN4, HNRNPF, IGF2BP1, ILF3, IMP8, MATR3, PABPC1, PRMT5, P4HA1, P4HB, RBM4, SART3, TNRC6A, TNRC6B, UPF1 and YBX1. Interacts with the P-body components DCP1A and XRN1. Associates with polysomes and messenger ribonucleoproteins (mNRPs). Interacts with RBM4; the interaction is modulated under stress-induced conditions, occurs under both cell proliferation and differentiation conditions and in an RNA- and phosphorylation-independent manner. Interacts with LIMD1, WTIP and AJUBA. Interacts with TRIM71; the interaction increases in presence of RNA. Interacts with APOBEC3G in an RNA-dependent manner. Interacts with APOBEC3A, APOBEC3C, APOBEC3F and APOBEC3H. Interacts with DICER1, TARBP2, EIF6, MOV10 and RPL7A (60S ribosome subunit); they form a large RNA-induced silencing complex (RISC). Interacts with FMR1. Interacts with ZFP36. Found in a complex, composed of AGO2, CHD7 and ARB2A. Interacts with RC3H1; the interaction is RNA independent. Interacts with SND1. Interacts with SYT11. Interacts with CLNK. Interacts with GARRE1. Interacts with GRB2; this interaction is important for the formation of a ternary complex containing GRB2, AGO2 and DICER1. In terms of assembly, (Microbial infection) Interacts with Epstein-Barr virus (EBV) tegument protein BGLF2; this interaction participates in the regulation of cellular miRNA by the virus, leading to enhanced SUMOylation. As to quaternary structure, (Microbial infection) Interacts with rotavirus A non-structural protein 5; this interaction probably plays a role in the sequestration of AGO2 in viral factories. (Microbial infection) Interacts with human herpesvirus 8 protein MTA/ORF57; this interaction inhibits P-body formation. Requires Mg(2+) as cofactor. The cofactor is Mn(2+). In terms of processing, hydroxylated. 4-hydroxylation appears to enhance protein stability but is not required for miRNA-binding or endonuclease activity. Ubiquitinated on surface-exposed lysines by a SCF-like E3 ubiquitin-protein ligase complex containing ZSWIM8 during target-directed microRNA degradation (TDMD), a process that mediates degradation of microRNAs (miRNAs). Ubiquitination by the SCF-like E3 ubiquitin-protein ligase complex containing ZSWIM8 leads to its subsequent degradation, thereby exposing miRNAs for degradation. ZSWIM8 recognizes and binds AGO2 when it is engaged with a TDMD target. Post-translationally, phosphorylated. A phosphorylation cycle of C-terminal serine cluster (Ser-824-Ser-834) regulates the release of target mRNAs. Target-binding leads to phosphorylation of these residues by CSNK1A1, which reduces the affinity of AGO2 for mRNA and enables target release. The ANKRD52-PPP6C phosphatase complex dephosphorylates the residues, which primes AGO2 for binding a new target. In terms of processing, phosphorylation at Ser-387 by AKT3; leads to up-regulate translational repression of microRNA target and down-regulate endonucleolytic cleavage.

The protein resides in the cytoplasm. It localises to the P-body. It is found in the nucleus. The enzyme catalyses Endonucleolytic cleavage to 5'-phosphomonoester.. Its activity is regulated as follows. Inhibited by EDTA. Its function is as follows. Required for RNA-mediated gene silencing (RNAi) by the RNA-induced silencing complex (RISC). The 'minimal RISC' appears to include AGO2 bound to a short guide RNA such as a microRNA (miRNA) or short interfering RNA (siRNA). These guide RNAs direct RISC to complementary mRNAs that are targets for RISC-mediated gene silencing. The precise mechanism of gene silencing depends on the degree of complementarity between the miRNA or siRNA and its target. Binding of RISC to a perfectly complementary mRNA generally results in silencing due to endonucleolytic cleavage of the mRNA specifically by AGO2. Binding of RISC to a partially complementary mRNA results in silencing through inhibition of translation, and this is independent of endonuclease activity. May inhibit translation initiation by binding to the 7-methylguanosine cap, thereby preventing the recruitment of the translation initiation factor eIF4-E. May also inhibit translation initiation via interaction with EIF6, which itself binds to the 60S ribosomal subunit and prevents its association with the 40S ribosomal subunit. The inhibition of translational initiation leads to the accumulation of the affected mRNA in cytoplasmic processing bodies (P-bodies), where mRNA degradation may subsequently occur. In some cases RISC-mediated translational repression is also observed for miRNAs that perfectly match the 3' untranslated region (3'-UTR). Can also up-regulate the translation of specific mRNAs under certain growth conditions. Binds to the AU element of the 3'-UTR of the TNF (TNF-alpha) mRNA and up-regulates translation under conditions of serum starvation. Also required for transcriptional gene silencing (TGS), in which short RNAs known as antigene RNAs or agRNAs direct the transcriptional repression of complementary promoter regions. (Microbial infection) Upon Sars-CoV-2 infection, associates with viral miRNA-like small RNA, CoV2-miR-O7a, and may repress mRNAs, such as BATF2, to evade the IFN response. The polypeptide is Protein argonaute-2 (Homo sapiens (Human)).